Reading from the N-terminus, the 282-residue chain is Probable endonuclease 4 (282 aa).

9 residues coordinate Zn(2+): His-67, His-107, Glu-144, Asp-178, His-181, His-215, Asp-228, His-230, and Glu-260.

Belongs to the AP endonuclease 2 family. It depends on Zn(2+) as a cofactor.

The enzyme catalyses Endonucleolytic cleavage to 5'-phosphooligonucleotide end-products.. Endonuclease IV plays a role in DNA repair. It cleaves phosphodiester bonds at apurinic or apyrimidinic (AP) sites, generating a 3'-hydroxyl group and a 5'-terminal sugar phosphate. The protein is Probable endonuclease 4 of Methanoculleus marisnigri (strain ATCC 35101 / DSM 1498 / JR1).